Here is a 127-residue protein sequence, read N- to C-terminus: Insulin-like growth factor 3.L (127 aa).

A signal peptide spans 1–49 (MPVTAMCLQDSKKLKKAKLTRKKVTPFPFSRMVLCLSLVFTLYVEATNA). Residues 49–80 (ARCLRPRSKELLCGSELVDILQFICGPTGFYV) form a b region. 3 disulfide bridges follow: Cys-61–Cys-99, Cys-73–Cys-112, and Cys-98–Cys-103. The interval 81-92 (SKGASFRNRNRP) is c. Residues 93-113 (GIVEECCFCGCSVAILESYCA) form an a region. The tract at residues 114 to 121 (APVTNFTG) is d. A propeptide spans 122–127 (REEQKS) (e peptide).

The protein belongs to the insulin family.

It localises to the secreted. The insulin-like growth factors, isolated from plasma, are structurally and functionally related to insulin but have a much higher growth-promoting activity. Promotes anterior neural development. The chain is Insulin-like growth factor 3.L from Xenopus laevis (African clawed frog).